The primary structure comprises 139 residues: Heavy metal-associated isoprenylated plant protein 13 (139 aa).

The region spanning 3-70 (PMKAVLQLSI…LCNTELVSVE (68 aa)) is the HMA domain. The disordered stretch occupies residues 70-94 (EVVKPPEKKPEPEKPAPPKPAPAPA). The segment covering 73–85 (KPPEKKPEPEKPA) has biased composition (basic and acidic residues). The residue at position 136 (C136) is a Cysteine methyl ester. C136 is lipidated: S-farnesyl cysteine. A propeptide spans 137–139 (VIM) (removed in mature form).

It belongs to the HIPP family.

In terms of biological role, probable heavy-metal-binding protein. The protein is Heavy metal-associated isoprenylated plant protein 13 of Arabidopsis thaliana (Mouse-ear cress).